The sequence spans 536 residues: MASAEETFFSAARSRRLACDRCHRHKLRCERSSVIVNGGVAVPLGPCKRCLKACIPCQTVQTISGAFTAAKTGDTPVPRRSAREADQAASPAKRAPSPARRPTASTPRNVPGLIHDDTLSGTDTAPFEISVADAAMLDVSNFDFSGSEFIDLGSNGVLSSPTPIQSPPDHGSLIRDSEIRDRTPIPPHNQPPPRYDDFANDLSCFGTMAPKDDTISTLPALTDVEKASTGSSKSAPERGPREECSQRLLEIHGLLLNELQCITPADVTDALMFPENGSFSGRTRTGQGPGNTVVHRVLFTSERLIELLSIIRAADTAINGDKREAGIGPRNTSSFVDLPIVISILTCYVGLLSVYHAIFSHIYEALRVYEPLRAAKIRQRAWTRRGSVPGPKPGPGLVQPRAIYGADEAGGRPALNVLGIRIQLEIMTHMLEQIDSALFGPRVAHGADGDEGRTDTINRGGEVMFGHPATKALLATMLSHEGYDSGVPVGPFADGDGDDDDDDGYMEGMRGCRMGFRTLMGLQKNIRRLLRTNSFG.

Positions 19 to 57 (CDRCHRHKLRCERSSVIVNGGVAVPLGPCKRCLKACIPC) form a DNA-binding region, zn(2)-C6 fungal-type. Disordered regions lie at residues 70-122 (AKTG…LSGT) and 220-243 (ALTD…PREE). The segment covering 88 to 108 (AASPAKRAPSPARRPTASTPR) has biased composition (low complexity).

It localises to the nucleus. In terms of biological role, transcription factor; part of the gene cluster that mediates the biosynthesis of chaetoglobosin A which has a unique inhibitory activity against actin polymerization in mammalian cells. Chaetoglobosin A and its intermediates are involved in the morphological differentiation of C.globosum. Binds directly to asymmetric direct repeats present in the promoters of the chaetoglobosin A cluster genes. This Chaetomium globosum (strain ATCC 6205 / CBS 148.51 / DSM 1962 / NBRC 6347 / NRRL 1970) (Soil fungus) protein is Transcription factor cheR.